We begin with the raw amino-acid sequence, 137 residues long: Protein MesC (137 aa).

This chain is Protein MesC (mesC), found in Leuconostoc mesenteroides.